We begin with the raw amino-acid sequence, 160 residues long: Dihydrofolate reductase (160 aa).

Residues 2–159 enclose the DHFR domain; sequence TFSLIVATTL…YDCRFLILTR (158 aa). Substrate is bound at residue Ile6. Residues Ala8 and 14–20 contribute to the NADP(+) site; that span reads VIGKDNQ. Asp28 serves as a coordination point for substrate. 46 to 47 is an NADP(+) binding site; the sequence is KT. Substrate-binding residues include Arg53 and Arg58. NADP(+) is bound by residues 64 to 65 and 96 to 103; these read SR and GGGELFKQ. Position 114 (Thr114) interacts with substrate.

This sequence belongs to the dihydrofolate reductase family.

The catalysed reaction is (6S)-5,6,7,8-tetrahydrofolate + NADP(+) = 7,8-dihydrofolate + NADPH + H(+). It participates in cofactor biosynthesis; tetrahydrofolate biosynthesis; 5,6,7,8-tetrahydrofolate from 7,8-dihydrofolate: step 1/1. Key enzyme in folate metabolism. Catalyzes an essential reaction for de novo glycine and purine synthesis, and for DNA precursor synthesis. This chain is Dihydrofolate reductase (folA), found in Haemophilus influenzae (strain ATCC 51907 / DSM 11121 / KW20 / Rd).